The sequence spans 98 residues: Venom toxin OcyC11 (98 aa).

The first 20 residues, 1 to 20 (MKIACTLVLFVMLRCYVNAR), serve as a signal peptide directing secretion.

Contains 4 disulfide bonds. As to expression, expressed by the venom gland.

The protein localises to the secreted. The sequence is that of Venom toxin OcyC11 from Opisthacanthus cayaporum (South American scorpion).